We begin with the raw amino-acid sequence, 155 residues long: uncharacterized protein (155 aa).

Disordered regions lie at residues 24 to 63 (RVGY…VVLK) and 80 to 155 (KAAK…DENE). Positions 43-56 (PDEDGNESDKEDEQ) are enriched in acidic residues. S50 bears the Phosphoserine mark. N6-acetyllysine is present on K108. Positions 128 to 147 (KQSPVRKNSQKQIKNSSLLS) are enriched in polar residues. S130, S147, and S150 each carry phosphoserine.

This is an uncharacterized protein from Rattus norvegicus (Rat).